Here is a 154-residue protein sequence, read N- to C-terminus: Interleukin-2 (154 aa).

A signal peptide spans 1–20 (MYKMQLLSCIALTLALVANG). Thr-23 carries O-linked (GalNAc...) threonine glycosylation. Cys-78 and Cys-126 are oxidised to a cystine.

The protein belongs to the IL-2 family.

The protein localises to the secreted. Its function is as follows. Cytokine produced by activated CD4-positive helper T-cells and to a lesser extend activated CD8-positive T-cells and natural killer (NK) cells that plays pivotal roles in the immune response and tolerance. Binds to a receptor complex composed of either the high-affinity trimeric IL-2R (IL2RA/CD25, IL2RB/CD122 and IL2RG/CD132) or the low-affinity dimeric IL-2R (IL2RB and IL2RG). Interaction with the receptor leads to oligomerization and conformation changes in the IL-2R subunits resulting in downstream signaling starting with phosphorylation of JAK1 and JAK3. In turn, JAK1 and JAK3 phosphorylate the receptor to form a docking site leading to the phosphorylation of several substrates including STAT5. This process leads to activation of several pathways including STAT, phosphoinositide-3-kinase/PI3K and mitogen-activated protein kinase/MAPK pathways. Functions as a T-cell growth factor and can increase NK-cell cytolytic activity as well. Promotes strong proliferation of activated B-cells and subsequently immunoglobulin production. Plays a pivotal role in regulating the adaptive immune system by controlling the survival and proliferation of regulatory T-cells, which are required for the maintenance of immune tolerance. Moreover, participates in the differentiation and homeostasis of effector T-cell subsets, including Th1, Th2, Th17 as well as memory CD8-positive T-cells. The chain is Interleukin-2 (IL2) from Delphinapterus leucas (Beluga whale).